The primary structure comprises 232 residues: Large ribosomal subunit protein uL1 (232 aa).

This sequence belongs to the universal ribosomal protein uL1 family. Part of the 50S ribosomal subunit.

Binds directly to 23S rRNA. The L1 stalk is quite mobile in the ribosome, and is involved in E site tRNA release. In terms of biological role, protein L1 is also a translational repressor protein, it controls the translation of the L11 operon by binding to its mRNA. The polypeptide is Large ribosomal subunit protein uL1 (Xylella fastidiosa (strain 9a5c)).